The following is a 126-amino-acid chain: Small ribosomal subunit protein uS13 (126 aa).

A disordered region spans residues 91 to 126 (HRAGLPVRGQRTRTNSRTRRSAKRTVAGKKKAPSKK). Residues 100–126 (QRTRTNSRTRRSAKRTVAGKKKAPSKK) show a composition bias toward basic residues.

Belongs to the universal ribosomal protein uS13 family. In terms of assembly, part of the 30S ribosomal subunit. Forms a loose heterodimer with protein S19. Forms two bridges to the 50S subunit in the 70S ribosome.

In terms of biological role, located at the top of the head of the 30S subunit, it contacts several helices of the 16S rRNA. In the 70S ribosome it contacts the 23S rRNA (bridge B1a) and protein L5 of the 50S subunit (bridge B1b), connecting the 2 subunits; these bridges are implicated in subunit movement. Contacts the tRNAs in the A and P-sites. The protein is Small ribosomal subunit protein uS13 of Acaryochloris marina (strain MBIC 11017).